A 361-amino-acid polypeptide reads, in one-letter code: MTPIPSDRLDAILARHDIVTAQLADGSADAGSIVQLSRELSELDGVVAAIHHYRLAEANLAGIRAMIDEPGGDPEMRALAAEEKPEAEEALEQAHRALQLILLPKDAADEKSAILEIRAGTGGDEAALFAGDLFRMYARYAESKGWRVEVISESEGTAGGYREVVAEVKGRSVFSRLKFESGAHRVQRVPDTETQGRIHTSAATVAVLPEAEEVDIVVNEADLKIDTMRAQGAGGQHVNKTESAIRITHIPTGVVVFVQEERSQHKNRARAMSLLRSKLFDAERTAKDSARAADRKAQVGSGDRSERIRTYNFPQGRVTDHRINLTLYKLEEVMAGQALDEVIDALVTEHQAELLAAEGMA.

N5-methylglutamine is present on Gln-236. Positions 285-309 are enriched in basic and acidic residues; that stretch reads TAKDSARAADRKAQVGSGDRSERIR. The segment at 285–311 is disordered; sequence TAKDSARAADRKAQVGSGDRSERIRTY.

This sequence belongs to the prokaryotic/mitochondrial release factor family. Methylated by PrmC. Methylation increases the termination efficiency of RF1.

Its subcellular location is the cytoplasm. Its function is as follows. Peptide chain release factor 1 directs the termination of translation in response to the peptide chain termination codons UAG and UAA. This Methylorubrum extorquens (strain CM4 / NCIMB 13688) (Methylobacterium extorquens) protein is Peptide chain release factor 1.